A 362-amino-acid chain; its full sequence is tRNA N6-adenosine threonylcarbamoyltransferase (362 aa).

Residues His116 and His120 each coordinate Fe cation. Residues 138 to 142 (LVSGG), Asp171, Gly184, and Asn284 contribute to the substrate site. Asp312 contributes to the Fe cation binding site.

It belongs to the KAE1 / TsaD family. Fe(2+) serves as cofactor.

Its subcellular location is the cytoplasm. It carries out the reaction L-threonylcarbamoyladenylate + adenosine(37) in tRNA = N(6)-L-threonylcarbamoyladenosine(37) in tRNA + AMP + H(+). Required for the formation of a threonylcarbamoyl group on adenosine at position 37 (t(6)A37) in tRNAs that read codons beginning with adenine. Is involved in the transfer of the threonylcarbamoyl moiety of threonylcarbamoyl-AMP (TC-AMP) to the N6 group of A37, together with TsaE and TsaB. TsaD likely plays a direct catalytic role in this reaction. This chain is tRNA N6-adenosine threonylcarbamoyltransferase, found in Chelativorans sp. (strain BNC1).